The primary structure comprises 168 residues: uncharacterized protein (168 aa).

This is an uncharacterized protein from Saccharomyces cerevisiae (strain ATCC 204508 / S288c) (Baker's yeast).